We begin with the raw amino-acid sequence, 85 residues long: UPF0386 protein RHE_CH01859 (85 aa).

This sequence belongs to the UPF0386 family.

This is UPF0386 protein RHE_CH01859 from Rhizobium etli (strain ATCC 51251 / DSM 11541 / JCM 21823 / NBRC 15573 / CFN 42).